Here is a 98-residue protein sequence, read N- to C-terminus: Small ribosomal subunit protein uS17 (98 aa).

It belongs to the universal ribosomal protein uS17 family. As to quaternary structure, part of the 30S ribosomal subunit.

One of the primary rRNA binding proteins, it binds specifically to the 5'-end of 16S ribosomal RNA. The chain is Small ribosomal subunit protein uS17 from Synechococcus sp. (strain CC9605).